The primary structure comprises 455 residues: Deoxyribodipyrimidine photo-lyase (455 aa).

Residues 2–131 (SVAVVLFTSD…ELHVHDAVVT (130 aa)) form the Photolyase/cryptochrome alpha/beta domain. Residues Y219 and 231–235 (TSRLS) contribute to the FAD site. Interaction with DNA stretches follow at residues 266-273 (QLAWRDFH) and 330-331 (NR). 361–363 (DGD) serves as a coordination point for FAD. Position 392 (Q392) interacts with DNA.

This sequence belongs to the DNA photolyase class-1 family. As to quaternary structure, monomer. It depends on FAD as a cofactor. The cofactor is coenzyme F420-(gamma-Glu)n.

It carries out the reaction cyclobutadipyrimidine (in DNA) = 2 pyrimidine residues (in DNA).. Its function is as follows. Involved in repair of UV radiation-induced DNA damage. Catalyzes the light-dependent monomerization (300-600 nm) of cyclobutyl pyrimidine dimers (in cis-syn configuration), which are formed between adjacent bases on the same DNA strand upon exposure to ultraviolet radiation. This Streptomyces griseus protein is Deoxyribodipyrimidine photo-lyase (phr).